A 248-amino-acid polypeptide reads, in one-letter code: Ribosomal RNA small subunit methyltransferase J (248 aa).

S-adenosyl-L-methionine contacts are provided by residues 98–99, 114–115, 150–151, and D168; these read RD, ER, and SS.

It belongs to the methyltransferase superfamily. RsmJ family.

It is found in the cytoplasm. The catalysed reaction is guanosine(1516) in 16S rRNA + S-adenosyl-L-methionine = N(2)-methylguanosine(1516) in 16S rRNA + S-adenosyl-L-homocysteine + H(+). Its function is as follows. Specifically methylates the guanosine in position 1516 of 16S rRNA. This chain is Ribosomal RNA small subunit methyltransferase J, found in Shewanella baltica (strain OS223).